A 238-amino-acid polypeptide reads, in one-letter code: tRNA (guanine-N(7)-)-methyltransferase (238 aa).

4 residues coordinate S-adenosyl-L-methionine: Glu68, Glu93, Asp120, and Asp143. Residue Asp143 is part of the active site. Residues Lys147, Asp179, and 216 to 219 contribute to the substrate site; that span reads TKFE.

Belongs to the class I-like SAM-binding methyltransferase superfamily. TrmB family.

The enzyme catalyses guanosine(46) in tRNA + S-adenosyl-L-methionine = N(7)-methylguanosine(46) in tRNA + S-adenosyl-L-homocysteine. Its pathway is tRNA modification; N(7)-methylguanine-tRNA biosynthesis. Catalyzes the formation of N(7)-methylguanine at position 46 (m7G46) in tRNA. The sequence is that of tRNA (guanine-N(7)-)-methyltransferase from Marinobacter nauticus (strain ATCC 700491 / DSM 11845 / VT8) (Marinobacter aquaeolei).